Reading from the N-terminus, the 106-residue chain is UPF0145 protein PputW619_2377 (106 aa).

It belongs to the UPF0145 family.

The protein is UPF0145 protein PputW619_2377 of Pseudomonas putida (strain W619).